We begin with the raw amino-acid sequence, 476 residues long: Argininosuccinate lyase (476 aa).

The span at 1–17 (MTDTGSSDTNTDTTGTS) shows a compositional bias: low complexity. The segment at 1-22 (MTDTGSSDTNTDTTGTSKANTM) is disordered.

Belongs to the lyase 1 family. Argininosuccinate lyase subfamily.

It localises to the cytoplasm. The catalysed reaction is 2-(N(omega)-L-arginino)succinate = fumarate + L-arginine. It participates in amino-acid biosynthesis; L-arginine biosynthesis; L-arginine from L-ornithine and carbamoyl phosphate: step 3/3. In Jannaschia sp. (strain CCS1), this protein is Argininosuccinate lyase.